A 267-amino-acid chain; its full sequence is NAD kinase 2 (267 aa).

D52 (proton acceptor) is an active-site residue. Residues 52 to 53, 124 to 125, R151, D153, 164 to 169, and A188 contribute to the NAD(+) site; these read DA, NE, and TAYNKS.

Belongs to the NAD kinase family. A divalent metal cation is required as a cofactor.

It localises to the cytoplasm. The catalysed reaction is NAD(+) + ATP = ADP + NADP(+) + H(+). Involved in the regulation of the intracellular balance of NAD and NADP, and is a key enzyme in the biosynthesis of NADP. Catalyzes specifically the phosphorylation on 2'-hydroxyl of the adenosine moiety of NAD to yield NADP. The polypeptide is NAD kinase 2 (Bacillus anthracis).